Consider the following 671-residue polypeptide: DNA ligase (671 aa).

Residues 38–42 (DKEFD), 87–88 (SL), and Glu-113 each bind NAD(+). Lys-115 acts as the N6-AMP-lysine intermediate in catalysis. Positions 136, 170, 282, and 306 each coordinate NAD(+). 4 residues coordinate Zn(2+): Cys-396, Cys-399, Cys-414, and Cys-419. Positions 586-671 (SDLQPFVGQS…LLKQEGIAID (86 aa)) constitute a BRCT domain.

This sequence belongs to the NAD-dependent DNA ligase family. LigA subfamily. The cofactor is Mg(2+). It depends on Mn(2+) as a cofactor.

The enzyme catalyses NAD(+) + (deoxyribonucleotide)n-3'-hydroxyl + 5'-phospho-(deoxyribonucleotide)m = (deoxyribonucleotide)n+m + AMP + beta-nicotinamide D-nucleotide.. DNA ligase that catalyzes the formation of phosphodiester linkages between 5'-phosphoryl and 3'-hydroxyl groups in double-stranded DNA using NAD as a coenzyme and as the energy source for the reaction. It is essential for DNA replication and repair of damaged DNA. The sequence is that of DNA ligase from Leptospira biflexa serovar Patoc (strain Patoc 1 / Ames).